We begin with the raw amino-acid sequence, 350 residues long: DNA repair protein RAD51 homolog 2 (350 aa).

The segment at 1 to 75 (MSSKKLRRVG…TAYELKTRRS (75 aa)) is interaction with RAD51C. 108–115 (GPPGCGKT) is an ATP binding site.

Belongs to the RecA family. RAD51 subfamily. Part of the BCDX2 complex consisting of RAD51B, RAD51C, RAD51D and XRCC2; the complex has a ring-like structure arranged into a flat disc around a central channel. The BCDX2 subcomplex RAD51B:RAD51C interacts with RAD51. Interacts with SWSAP1; involved in homologous recombination repair. Interacts with HELQ. Phosphorylated on tyrosine residues by BCR-ABL. As to expression, expressed in a wide range of tissues.

The protein resides in the nucleus. Involved in the homologous recombination repair (HRR) pathway of double-stranded DNA breaks arising during DNA replication or induced by DNA-damaging agents. May promote the assembly of presynaptic RAD51 nucleoprotein filaments. Binds single-stranded DNA and double-stranded DNA and has DNA-dependent ATPase activity. Part of the RAD51 paralog protein complex BCDX2 which acts in the BRCA1-BRCA2-dependent HR pathway. Upon DNA damage, BCDX2 acts downstream of BRCA2 recruitment and upstream of RAD51 recruitment. BCDX2 binds predominantly to the intersection of the four duplex arms of the Holliday junction and to junction of replication forks. The BCDX2 complex was originally reported to bind single-stranded DNA, single-stranded gaps in duplex DNA and specifically to nicks in duplex DNA. The BCDX2 subcomplex RAD51B:RAD51C exhibits single-stranded DNA-dependent ATPase activity suggesting an involvement in early stages of the HR pathway. The sequence is that of DNA repair protein RAD51 homolog 2 (Rad51b) from Mus musculus (Mouse).